The primary structure comprises 140 residues: Large ribosomal subunit protein bL17 (140 aa).

It belongs to the bacterial ribosomal protein bL17 family. In terms of assembly, part of the 50S ribosomal subunit. Contacts protein L32.

The sequence is that of Large ribosomal subunit protein bL17 from Paramagnetospirillum magneticum (strain ATCC 700264 / AMB-1) (Magnetospirillum magneticum).